The primary structure comprises 144 residues: D-aminoacyl-tRNA deacylase (144 aa).

The short motif at 136–137 (GP) is the Gly-cisPro motif, important for rejection of L-amino acids element.

This sequence belongs to the DTD family. As to quaternary structure, homodimer.

The protein resides in the cytoplasm. It catalyses the reaction glycyl-tRNA(Ala) + H2O = tRNA(Ala) + glycine + H(+). The enzyme catalyses a D-aminoacyl-tRNA + H2O = a tRNA + a D-alpha-amino acid + H(+). Functionally, an aminoacyl-tRNA editing enzyme that deacylates mischarged D-aminoacyl-tRNAs. Also deacylates mischarged glycyl-tRNA(Ala), protecting cells against glycine mischarging by AlaRS. Acts via tRNA-based rather than protein-based catalysis; rejects L-amino acids rather than detecting D-amino acids in the active site. By recycling D-aminoacyl-tRNA to D-amino acids and free tRNA molecules, this enzyme counteracts the toxicity associated with the formation of D-aminoacyl-tRNA entities in vivo and helps enforce protein L-homochirality. This chain is D-aminoacyl-tRNA deacylase, found in Pasteurella multocida (strain Pm70).